The primary structure comprises 86 residues: Sodium channel neurotoxin MeuNaTxalpha-4 (86 aa).

The signal sequence occupies residues 1-19; it reads MNYLILISFALLVITGVES. An LCN-type CS-alpha/beta domain is found at 21–85; it reads RDAYIAKPHN…VPIRIPGKCH (65 aa). Intrachain disulfides connect Cys-31-Cys-84, Cys-35-Cys-57, Cys-43-Cys-67, and Cys-47-Cys-69. Arg-86 is a propeptide (removed by a carboxypeptidase).

The protein belongs to the long (4 C-C) scorpion toxin superfamily. Sodium channel inhibitor family. Alpha subfamily. In terms of tissue distribution, expressed by the venom gland.

It localises to the secreted. Functionally, alpha toxins bind voltage-independently at site-3 of sodium channels (Nav) and inhibit the inactivation of the activated channels, thereby blocking neuronal transmission. This toxin inhibits inactivation of drosophila DmNav1 (EC(50)=130 nM). The protein is Sodium channel neurotoxin MeuNaTxalpha-4 of Mesobuthus eupeus (Lesser Asian scorpion).